Reading from the N-terminus, the 116-residue chain is Fluoride-specific ion channel FluC 1 (116 aa).

4 consecutive transmembrane segments (helical) span residues 1-21 (MGKLFLIGAGGFIGACLRYTV), 31-51 (IPAGTLTVNLLGTIVLAFLTF), 58-78 (MVYLVNIGILGSFTTFSTFAY), and 92-112 (FFLNIFLNVALCLVGVSIAYL). The Na(+) site is built by Gly68 and Thr71.

This sequence belongs to the fluoride channel Fluc/FEX (TC 1.A.43) family.

The protein localises to the cell membrane. It catalyses the reaction fluoride(in) = fluoride(out). Na(+) is not transported, but it plays an essential structural role and its presence is essential for fluoride channel function. Its function is as follows. Fluoride-specific ion channel. Important for reducing fluoride concentration in the cell, thus reducing its toxicity. This is Fluoride-specific ion channel FluC 1 from Methanosarcina barkeri (strain Fusaro / DSM 804).